A 158-amino-acid chain; its full sequence is Ribosome maturation factor RimP (158 aa).

The protein belongs to the RimP family.

Its subcellular location is the cytoplasm. Required for maturation of 30S ribosomal subunits. The sequence is that of Ribosome maturation factor RimP from Lactobacillus helveticus (strain DPC 4571).